Here is a 361-residue protein sequence, read N- to C-terminus: DNA replication and repair protein RecF (361 aa).

30–37 (GDNAQGKT) provides a ligand contact to ATP.

Belongs to the RecF family.

Its subcellular location is the cytoplasm. The RecF protein is involved in DNA metabolism; it is required for DNA replication and normal SOS inducibility. RecF binds preferentially to single-stranded, linear DNA. It also seems to bind ATP. This Clostridium novyi (strain NT) protein is DNA replication and repair protein RecF.